Consider the following 618-residue polypeptide: C2H2 finger domain transcription factor sebA (618 aa).

The disordered stretch occupies residues 394–488 (GDATQSTEEM…RGRKQSLTDD (95 aa)). Basic residues predominate over residues 406–416 (KKRVTSRRSLK). 2 stretches are compositionally biased toward low complexity: residues 417-432 (KAST…AKKT) and 443-458 (SDTT…SSRQ). The span at 459–469 (NSTANTSNSES) shows a compositional bias: polar residues. 2 C2H2-type zinc fingers span residues 493-516 (FVCS…RSLH) and 522-544 (FECH…ARTH). Over residues 582 to 597 (NAATSKSTTSESSDGT) the composition is skewed to low complexity. The disordered stretch occupies residues 582–618 (NAATSKSTTSESSDGTISDTSSVGGRPAKKRRRDDHV). The span at 608-618 (PAKKRRRDDHV) shows a compositional bias: basic residues.

Its subcellular location is the nucleus. It localises to the cytoplasm. In terms of biological role, transcription factor that is involved in the response to heat shock, oxidative stress, and poor nutrient conditions. Controls expression of oxidative stress response genes such as ccp1, cat1, cat2, sod2; as well as of heat shock genes such as hsf1, hsp30 and hsp90. Negatively controls the expression of the fumiquinazoline (fmq) cluster via binding to the STRE motifs at the fmqA-D promoters. Plays a role in virulence. The sequence is that of C2H2 finger domain transcription factor sebA from Aspergillus fumigatus (strain ATCC MYA-4609 / CBS 101355 / FGSC A1100 / Af293) (Neosartorya fumigata).